Reading from the N-terminus, the 451-residue chain is Trigger factor (451 aa).

The PPIase FKBP-type domain maps to 173–258 (GDRVTLDFVG…LKKIEWAHLP (86 aa)).

It belongs to the FKBP-type PPIase family. Tig subfamily.

It is found in the cytoplasm. The enzyme catalyses [protein]-peptidylproline (omega=180) = [protein]-peptidylproline (omega=0). Involved in protein export. Acts as a chaperone by maintaining the newly synthesized protein in an open conformation. Functions as a peptidyl-prolyl cis-trans isomerase. In Cupriavidus necator (strain ATCC 17699 / DSM 428 / KCTC 22496 / NCIMB 10442 / H16 / Stanier 337) (Ralstonia eutropha), this protein is Trigger factor.